The primary structure comprises 482 residues: Histone deacetylase 1 (482 aa).

The interval 9–321 (RKVCYYYDGD…WTYETAVALD (313 aa)) is histone deacetylase. Positions 27 and 31 each coordinate 1D-myo-inositol 1,4,5,6-tetrakisphosphate. Lys74 bears the N6-acetyllysine; alternate mark. Lys74 participates in a covalent cross-link: Glycyl lysine isopeptide (Lys-Gly) (interchain with G-Cter in SUMO2); alternate. The active site involves His141. Positions 176 and 178 each coordinate Zn(2+). At Lys220 the chain carries N6-acetyllysine. Cys261 carries the post-translational modification S-nitrosocysteine. Asp264 is a Zn(2+) binding site. Arg270 is a binding site for 1D-myo-inositol 1,4,5,6-tetrakisphosphate. Cys273 carries the S-nitrosocysteine modification. Residues 390-400 (PEESGDEDEED) are compositionally biased toward acidic residues. Residues 390–482 (PEESGDEDEE…KGVKEEVKLA (93 aa)) form a disordered region. A phosphoserine mark is found at Ser393, Ser406, Ser409, Ser421, and Ser423. Over residues 401 to 416 (PDKRISICSSDKRIAC) the composition is skewed to basic and acidic residues. The span at 417–427 (EEEFSDSDEEG) shows a compositional bias: acidic residues. Lys432 carries the post-translational modification N6-methylated lysine; by EHMT2. A Glycyl lysine isopeptide (Lys-Gly) (interchain with G-Cter in SUMO2) cross-link involves residue Lys438. The span at 443-482 (VKTEDEKEKDPEEKKEVTEEEKTKEEKQEAKGVKEEVKLA) shows a compositional bias: basic and acidic residues. A Glycyl lysine isopeptide (Lys-Gly) (interchain with G-Cter in SUMO2); alternate cross-link involves residue Lys444. A Glycyl lysine isopeptide (Lys-Gly) (interchain with G-Cter in SUMO); alternate cross-link involves residue Lys444. Glycyl lysine isopeptide (Lys-Gly) (interchain with G-Cter in SUMO2) cross-links involve residues Lys456, Lys457, and Lys473. Lys476 participates in a covalent cross-link: Glycyl lysine isopeptide (Lys-Gly) (interchain with G-Cter in SUMO2); alternate. Lys476 is covalently cross-linked (Glycyl lysine isopeptide (Lys-Gly) (interchain with G-Cter in SUMO); alternate). A Glycyl lysine isopeptide (Lys-Gly) (interchain with G-Cter in SUMO2) cross-link involves residue Lys480.

Belongs to the histone deacetylase family. HD type 1 subfamily. As to quaternary structure, part of the core histone deacetylase (HDAC) complex composed of HDAC1, HDAC2, RBBP4 and RBBP7, the core complex associates with SIN3, SAP18 and SAP30 to form the SIN3 HDAC complex. Component of the nucleosome remodeling and deacetylase (NuRD) repressor complex, composed of core proteins MTA1, MTA2, MTA3, RBBP4, RBBP7, HDAC1, HDAC2, MBD2, MBD3, and peripherally associated proteins CDK2AP1, CDK2AP2, GATAD2A, GATAD2B, CHD3, CHD4 and CHD5. The exact stoichiometry of the NuRD complex is unknown, and some subunits such as MBD2 and MBD3, GATAD2A and GATAD2B, and CHD3, CHD4 and CHD5 define mutually exclusive NuRD complexes. Component of a BHC histone deacetylase complex that contains HDAC1, HDAC2, HMG20B/BRAF35, KDM1A, RCOR1/CoREST and PHF21A/BHC80. The BHC complex may also contain ZMYM2, ZNF217, ZMYM3, GSE1 and GTF2I. Component of a mSin3A corepressor complex that contains SIN3A, SAP130, SUDS3/SAP45, ARID4B/SAP180, HDAC1 and HDAC2. Found in a trimeric complex with APBB1 and TSHZ3; the interaction between HDAC1 and APBB1 is mediated by TSHZ3. Forms a complex comprising APPL1, RUVBL2, APPL2, CTNNB1 and HDAC2. Component of a RCOR/GFI/KDM1A/HDAC complex. Part of a complex composed of TRIM28, HDAC1, HDAC2 and EHMT2. Part of a complex containing at least CDYL, MIER1, MIER2, HDAC1 and HDAC2. The large PER complex involved in the histone deacetylation is composed of at least HDAC1, PER2, SFPQ and SIN3A. Associates with the 9-1-1 complex; interacts with HUS1. Found in a complex with DNMT3A and HDAC7. Found in a complex with YY1, SIN3A and GON4L. Identified in a histone deacetylase complex that contains DNTTIP1, HDAC1 and MIDEAS; this complex assembles into a tetramer that contains four copies of each protein chain. Found in a complex composed of at least SINHCAF, SIN3A, HDAC1, SAP30, RBBP4, OGT and TET1. Component of the SIN3B complex, which includes SIN3B, HDAC1, PHF12 and MORF4L1. Interacts with GFI1; the interaction is direct. Interacts directly with GFI1B. Interacts with TSHZ3 (via N-terminus); the interaction is direct. Interacts with APEX1; the interaction is not dependent on the acetylated status of APEX1. Interacts with BANP. Interacts with BAZ2A/TIP5. Interacts with BCL6. Interacts with BCOR. Interacts with BHLHE40/DEC1. Interacts with BRCC3; this interaction is enhanced in the presence of PWWP2B. Interacts with BRMS1. Interacts with BRMS1L. Interacts with C10orf90/FATS (via its N-terminal); the interaction prevents binding of HDAC1 to CDKN1A/p21 and facilitates the acetylation and stabilization of CDKN1A/p21. Interacts with CBFA2T3. Interacts with CCAR2. Interacts with CDK2AP1. Interacts with CHD3. Interacts with CHD4. Interacts with CHFR. Interacts with CIART. Interacts with CDKN1A/p21. Interacts with CDK5 complexed to CDK5R1 (p25). Interacts with CRY1. Interacts with DAXX. Interacts with DDIT3/CHOP. Interacts with DDX5. Interacts with DHX36; this interaction occurs in a RNA-dependent manner. Interacts with DNMT1. Interacts with DNTTIP1. Interacts with E4F1. Interacts with EP300. Interacts with ERCC6. Interacts with GATAD2A. Interacts with HCFC1. Interacts with HDAC9. Interacts with HUS1. Interacts with INSM1. Interacts with KDM4A. Interacts with KDM5A; this interaction impairs histone deacetylation. Interacts with KDM5B. Interacts with KLF1. Interacts with MBD3L2. Interacts with MIER1. Interacts with NFE4. Interacts with NR4A2/NURR1. Interacts with NR1D2 (via C-terminus). Interacts with NRIP1. Interacts with NSD2. Interacts with PACS2. Interacts with PHB2. Interacts with PPHLN1. Interacts with PRDM6. Interacts with PRDM16. Interacts with PWWP2A in a MTA1-dependent manner. Interacts with PWWP2B. Interacts with RB1. Interacts with RERE. Interacts with SANBR (via the BTB domain). Interacts with SAMSN1. Interacts with SAP30L. Interacts with SETDB1. Interacts with SIN3A. Interacts with SMAD3. Interacts with SMAD4; positively regulated by ZBTB7A. Interacts with SMARCAD1. Interacts with SMARCA4/BRG1. Interacts with SMYD2. Interacts with SMYD4 (via MYND-type zinc finger). Interacts with SP1; the interaction deacetylates SP1 and regulates its transcriptional activity. Interacts with SP3; the interaction deacetylates SP3 and regulates its transcriptional activity. In vitro, C(18) ceramides increase this interaction and the subsequent SP3 deacetylation and SP3-mediated repression of the TERT promoter. Interacts with SPEN/MINT. Interacts with SPHK2. Interacts with SUV39H1. Interacts with TGIF. Interacts with TGIF2. Interacts with TRAF6. Interacts with TRIM28; the interaction recruits HDAC1 to E2F1 and inhibits its acetylation. Interacts with TSC22D3 isoform 1; this interaction affects HDAC1 activity on MYOG promoter and thus inhibits MYOD1 transcriptional activity. Interacts with UHRF1. Interacts with UHRF2. Interacts with ZBTB7A. Interacts with ZMYND8. Interacts with ZMYND15. Interacts with ZNF431. Interacts with ZNF516; this interaction is enhanced in the presence of PWWP2B. Interacts with ZNF541. Interacts with ZNF638. Interacts with ZNHIT1. Interacts with the non-histone region of MACROH2A1. Identified in a complex with HDAC2, KCTD19, DNTTIP1 and ZNF541. Interacts with MSX3. Interacts with VRK1. Requires Zn(2+) as cofactor. In terms of processing, sumoylated on Lys-444 and Lys-476; which promotes enzymatic activity. Desumoylated by SENP1. Post-translationally, phosphorylation on Ser-421 and Ser-423 promotes enzymatic activity and interactions with NuRD and SIN3 complexes. Phosphorylated by CDK5. Ubiquitinated by CHFR and KCTD11, leading to its degradation by the proteasome.

The protein localises to the nucleus. The enzyme catalyses N(6)-acetyl-L-lysyl-[histone] + H2O = L-lysyl-[histone] + acetate. The catalysed reaction is N(6)-acetyl-L-lysyl-[protein] + H2O = L-lysyl-[protein] + acetate. It catalyses the reaction N(6)-(2E)-butenoyl-L-lysyl-[protein] + H2O = (2E)-2-butenoate + L-lysyl-[protein]. It carries out the reaction N(6)-[(S)-lactoyl]-L-lysyl-[protein] + H2O = (S)-lactate + L-lysyl-[protein]. With respect to regulation, inositol tetraphosphate (1D-myo-inositol 1,4,5,6-tetrakisphosphate) may act as an intermolecular glue between HDAC1 and N-Cor repressor complex components. Histone deacetylase that catalyzes the deacetylation of lysine residues on the N-terminal part of the core histones (H2A, H2B, H3 and H4). Histone deacetylation gives a tag for epigenetic repression and plays an important role in transcriptional regulation, cell cycle progression and developmental events. Histone deacetylases act via the formation of large multiprotein complexes. Acts as a component of the histone deacetylase NuRD complex which participates in the remodeling of chromatin. As part of the SIN3B complex is recruited downstream of the constitutively active genes transcriptional start sites through interaction with histones and mitigates histone acetylation and RNA polymerase II progression within transcribed regions contributing to the regulation of transcription. Also functions as a deacetylase for non-histone targets, such as NR1D2, RELA, SP1, SP3, STAT3 and TSHZ3. Deacetylates SP proteins, SP1 and SP3, and regulates their function. Component of the BRG1-RB1-HDAC1 complex, which negatively regulates the CREST-mediated transcription in resting neurons. Upon calcium stimulation, HDAC1 is released from the complex and CREBBP is recruited, which facilitates transcriptional activation. Deacetylates TSHZ3 and regulates its transcriptional repressor activity. Deacetylates 'Lys-310' in RELA and thereby inhibits the transcriptional activity of NF-kappa-B. Deacetylates NR1D2 and abrogates the effect of KAT5-mediated relieving of NR1D2 transcription repression activity. Component of a RCOR/GFI/KDM1A/HDAC complex that suppresses, via histone deacetylase (HDAC) recruitment, a number of genes implicated in multilineage blood cell development. Involved in CIART-mediated transcriptional repression of the circadian transcriptional activator: CLOCK-BMAL1 heterodimer. Required for the transcriptional repression of circadian target genes, such as PER1, mediated by the large PER complex or CRY1 through histone deacetylation. In addition to protein deacetylase activity, also has protein-lysine deacylase activity: acts as a protein decrotonylase and delactylase by mediating decrotonylation ((2E)-butenoyl) and delactylation (lactoyl) of histones, respectively. The protein is Histone deacetylase 1 (HDAC1) of Bos taurus (Bovine).